Reading from the N-terminus, the 127-residue chain is Small ribosomal subunit protein uS11 (127 aa).

Belongs to the universal ribosomal protein uS11 family. In terms of assembly, part of the 30S ribosomal subunit. Interacts with proteins S7 and S18. Binds to IF-3.

In terms of biological role, located on the platform of the 30S subunit, it bridges several disparate RNA helices of the 16S rRNA. Forms part of the Shine-Dalgarno cleft in the 70S ribosome. The polypeptide is Small ribosomal subunit protein uS11 (Streptococcus mutans serotype c (strain ATCC 700610 / UA159)).